The sequence spans 1174 residues: Creatine kinase, flagellar (1174 aa).

Polar residues predominate over residues 1-14; sequence MGCAASSQQTTATG. The interval 1-62 is disordered; that stretch reads MGCAASSQQT…PFVEPDPNYP (62 aa). Over residues 18–39 the composition is skewed to low complexity; the sequence is AAGEKANPAPANNNPNAANKAE. A Phosphagen kinase N-terminal 1 domain is found at 53 to 139; it reads PFVEPDPNYP…FDPTIDKRHN (87 aa). A 1; approximate repeat occupies 61-414; the sequence is YPDLSKHNNY…EKALEKGSDI (354 aa). Positions 166 to 408 constitute a Phosphagen kinase C-terminal 1 domain; that stretch reads YVLSCRVRTG…KKLIELEKAL (243 aa). Residues 169–173, histidine 232, arginine 277, and 333–337 contribute to the ATP site; these read SCRVR and RAGVH. Residues 426–512 enclose the Phosphagen kinase N-terminal 2 domain; the sequence is RAEQVKEGYP…FDPVIDARHG (87 aa). A 2; approximate repeat occupies 434-787; the sequence is YPDLSKHNNH…EKKLEKGEDI (354 aa). The 243-residue stretch at 539-781 folds into the Phosphagen kinase C-terminal 2 domain; sequence YVLSCRVRTG…ELLVQMEKKL (243 aa). Residues 542 to 546, histidine 605, arginine 706, 734 to 739, and aspartate 749 each bind ATP; these read SCRVR and RGTGGV. Residues 800-886 enclose the Phosphagen kinase N-terminal 3 domain; that stretch reads PIKPFSYDYP…FDPVISARHG (87 aa). One copy of the 3; approximate repeat lies at 808–1161; sequence YPDFSLHNNW…EKALMKGEDI (354 aa). The Phosphagen kinase C-terminal 3 domain occupies 913–1155; sequence FVLSCRVRTG…KLLVNLEKAL (243 aa).

This sequence belongs to the ATP:guanido phosphotransferase family. In terms of assembly, monomer.

The protein localises to the cytoplasm. It localises to the cytoskeleton. It is found in the flagellum axoneme. It catalyses the reaction creatine + ATP = N-phosphocreatine + ADP + H(+). In terms of biological role, this axonemal protein participates in an energy shuttle that utilizes phosphocreatine to transfer the energy from ATP generated by the mitochondrion in the sperm head to dynein in the distal portions of the flagellum. The sequence is that of Creatine kinase, flagellar from Strongylocentrotus purpuratus (Purple sea urchin).